Reading from the N-terminus, the 156-residue chain is Keratin-associated protein 13-4 (156 aa).

Repeat copies occupy residues 37 to 46, 47 to 56, 57 to 66, and 73 to 82. The interval 37-82 is 4 X 10 AA approximate repeats; that stretch reads CQLGSSLYRNCQKTCWEPTSCRKSCYRRRTSMLCSPCQTTCSRSLG.

This sequence belongs to the PMG family. In terms of assembly, interacts with hair keratins.

In terms of biological role, in the hair cortex, hair keratin intermediate filaments are embedded in an interfilamentous matrix, consisting of hair keratin-associated proteins (KRTAP), which are essential for the formation of a rigid and resistant hair shaft through their extensive disulfide bond cross-linking with abundant cysteine residues of hair keratins. The matrix proteins include the high-sulfur and high-glycine-tyrosine keratins. This Macaca fascicularis (Crab-eating macaque) protein is Keratin-associated protein 13-4 (KRTAP13-4).